Consider the following 66-residue polypeptide: DNA-directed RNA polymerase subunit omega (66 aa).

This sequence belongs to the RNA polymerase subunit omega family. As to quaternary structure, the RNAP catalytic core consists of 2 alpha, 1 beta, 1 beta' and 1 omega subunit. When a sigma factor is associated with the core the holoenzyme is formed, which can initiate transcription.

The enzyme catalyses RNA(n) + a ribonucleoside 5'-triphosphate = RNA(n+1) + diphosphate. Promotes RNA polymerase assembly. Latches the N- and C-terminal regions of the beta' subunit thereby facilitating its interaction with the beta and alpha subunits. The protein is DNA-directed RNA polymerase subunit omega of Clostridium botulinum (strain Alaska E43 / Type E3).